The following is a 138-amino-acid chain: Spermatid nuclear transition protein 4 (138 aa).

Residues 1–11 (AKVSRKPREPR) show a composition bias toward basic and acidic residues. A disordered region spans residues 1–138 (AKVSRKPREP…QGVTRRGRRY (138 aa)). Residue Ser4 is modified to Phosphoserine; by PKC. The Nuclear localization signal signature appears at 5 to 23 (RKPREPRTAVTQSTRRIKR). Basic residues-rich tracts occupy residues 19–34 (RRIKRKKTLSKPRSRG), 43–57 (MKIKRALRRNLRRKI), and 65–74 (KKAKKARKHF). Position 26 is a phosphothreonine; by PKA (Thr26). The Nuclear localization signal motif lies at 54–72 (RRKIQTSAGQPKKAKKARK). The segment covering 86–101 (NKKTNQNKRQNQNKRQ) has biased composition (low complexity). Residues 120–131 (PTTSCKWCSQGV) are compositionally biased toward polar residues.

It is found in the nucleus. Its subcellular location is the chromosome. In terms of biological role, involved in nuclear basic protein transition: histones are replaced by spermatid specific proteins which are themselves replaced by protamines in late spermatids. The polypeptide is Spermatid nuclear transition protein 4 (TNP4) (Sus scrofa (Pig)).